We begin with the raw amino-acid sequence, 225 residues long: Small ribosomal subunit protein eS1 (225 aa).

A compositionally biased stretch (acidic residues) spans 206-216; that stretch reads PVEEPAAEEVA. The disordered stretch occupies residues 206–225; that stretch reads PVEEPAAEEVAEAPAAETQE.

This sequence belongs to the eukaryotic ribosomal protein eS1 family.

In Methanococcus maripaludis (strain C5 / ATCC BAA-1333), this protein is Small ribosomal subunit protein eS1.